Consider the following 72-residue polypeptide: Translation initiation factor IF-1 1 (72 aa).

The S1-like domain occupies 1-72 (MSKEDVIQMQ…TKGRIVFRAK (72 aa)).

It belongs to the IF-1 family. Component of the 30S ribosomal translation pre-initiation complex which assembles on the 30S ribosome in the order IF-2 and IF-3, IF-1 and N-formylmethionyl-tRNA(fMet); mRNA recruitment can occur at any time during PIC assembly.

The protein localises to the cytoplasm. One of the essential components for the initiation of protein synthesis. Stabilizes the binding of IF-2 and IF-3 on the 30S subunit to which N-formylmethionyl-tRNA(fMet) subsequently binds. Helps modulate mRNA selection, yielding the 30S pre-initiation complex (PIC). Upon addition of the 50S ribosomal subunit IF-1, IF-2 and IF-3 are released leaving the mature 70S translation initiation complex. This chain is Translation initiation factor IF-1 1, found in Thiobacillus denitrificans (strain ATCC 25259 / T1).